A 159-amino-acid chain; its full sequence is 2-C-methyl-D-erythritol 2,4-cyclodiphosphate synthase (159 aa).

A divalent metal cation-binding residues include Asp10 and His12. Residues 10-12 and 37-38 each bind 4-CDP-2-C-methyl-D-erythritol 2-phosphate; these read DVH and HS. Residue His45 coordinates a divalent metal cation. 4-CDP-2-C-methyl-D-erythritol 2-phosphate contacts are provided by residues 59 to 61, 64 to 68, 103 to 109, 135 to 138, Phe142, and Arg145; these read DIG, FLDTD, AQAPKML, and TTTE.

Belongs to the IspF family. Homotrimer. The cofactor is a divalent metal cation.

The enzyme catalyses 4-CDP-2-C-methyl-D-erythritol 2-phosphate = 2-C-methyl-D-erythritol 2,4-cyclic diphosphate + CMP. Its pathway is isoprenoid biosynthesis; isopentenyl diphosphate biosynthesis via DXP pathway; isopentenyl diphosphate from 1-deoxy-D-xylulose 5-phosphate: step 4/6. Its function is as follows. Involved in the biosynthesis of isopentenyl diphosphate (IPP) and dimethylallyl diphosphate (DMAPP), two major building blocks of isoprenoid compounds. Catalyzes the conversion of 4-diphosphocytidyl-2-C-methyl-D-erythritol 2-phosphate (CDP-ME2P) to 2-C-methyl-D-erythritol 2,4-cyclodiphosphate (ME-CPP) with a corresponding release of cytidine 5-monophosphate (CMP). This chain is 2-C-methyl-D-erythritol 2,4-cyclodiphosphate synthase, found in Francisella tularensis subsp. tularensis (strain FSC 198).